A 92-amino-acid chain; its full sequence is Small ribosomal subunit protein uS19 (92 aa).

The protein belongs to the universal ribosomal protein uS19 family.

Protein S19 forms a complex with S13 that binds strongly to the 16S ribosomal RNA. The protein is Small ribosomal subunit protein uS19 of Streptococcus agalactiae serotype Ia (strain ATCC 27591 / A909 / CDC SS700).